The primary structure comprises 107 residues: Thioredoxin (107 aa).

Positions 2–107 (AGVLKNVTDD…ALLRPGPVPR (106 aa)) constitute a Thioredoxin domain. A disulfide bridge connects residues Cys-33 and Cys-36.

It belongs to the thioredoxin family.

Functionally, component of the thioredoxin-thioredoxin reductase system. Participates in various redox reactions through the reversible oxidation of its active center dithiol to a disulfide and catalyzes dithiol-disulfide exchange reactions. The sequence is that of Thioredoxin (trxA) from Streptomyces clavuligerus.